The chain runs to 46 residues: U1-plectoxin-Pt1f (46 aa).

5 disulfides stabilise this stretch: C4–C18, C11–C24, C17–C35, C21–C44, and C26–C33.

Belongs to the neurotoxin 02 (plectoxin) family. 02 (plectoxin) subfamily. In terms of tissue distribution, expressed by the venom gland.

The protein resides in the secreted. Its function is as follows. Potent toxin that may paralyze and/or kill insect pests such as H.virescens (lepidoptera), S.exigua (beet armyworm) and M.sexta (tobacco hornworm). This Plectreurys tristis (Spider) protein is U1-plectoxin-Pt1f.